The following is a 148-amino-acid chain: UPF0178 protein LPC_0108 (148 aa).

It belongs to the UPF0178 family.

This chain is UPF0178 protein LPC_0108, found in Legionella pneumophila (strain Corby).